The sequence spans 785 residues: MINITKPLTPKSISQQKQQQQHPYKNISTTKSNNNPQASGSKSFVQEKYPSQLYESEIKIHNQSLAEYDLDIYDIMVNLIETNKPNLSLYKQQPYLTFTIRLKLIDFLLKMSIRLKILPFVFFKAVKIFDRYCSKRIVLLDQSQLIITTCLWIASKVMGGNNHFVNINNLDKIGHENFRTINDLGYGCGGKYLGPTERFRLPKLHELVKLCGAKCKYDQGMFKQMEVHVLNTLEWSLNDPSIEEFIIDSHEFNVININNNNEYEQTITTNDESANANANDGNEFFKIKEFLSYAALYSHDLIDTNIIELGQVIMDLINETFQLQPFDKHYQTILNCDSDHPIRFDMQRYKHIKKAVIKSVLNASDFMMKVFHSKGPQFIYQQFNLQYKLNYTTNSIIGGFGNSGYSPTTTTTTTTSDNISTTPTSSTGSTTPVSSYIGYANSRSSSVSSTSSVASSSNANTPSSSCSTTSTTPLGMTPHKRQKNYSNYSNYSNYSNSSTSLGLTNNNNNNTTISPVDSTTINSHTKNSSQLNYQYHNGGSNNNNHHHHHKPSLSVSIPPPQMHSHHHSSTVYQMVTPPNSANKNSNKSNSANNNNTTTIATTTTTTTNNNNNSQLPAPHQLSYNNYFNSPNMQPPPPMKYTPGRKQQQQQNQGQNQQQPLQLYQGDNNNNGTNTNSKFNSIAGSRAVSSSSSSAVSIASSISTNNYDKYDDDDDDDNSNDLFSSSRRFMNYSNYSSSTINGSVMSGVINNNSGNGKGNGNGGSGTPISENDSPIYTKTRLCNMIH.

Residues 1–42 (MINITKPLTPKSISQQKQQQQHPYKNISTTKSNNNPQASGSK) form a disordered region. Over residues 22-42 (HPYKNISTTKSNNNPQASGSK) the composition is skewed to polar residues. The Cyclin N-terminal domain maps to 71–238 (DIYDIMVNLI…VLNTLEWSLN (168 aa)). 3 disordered regions span residues 408–433 (TTTT…TTPV), 447–679 (VSST…SKFN), and 750–774 (NNSG…DSPI). Composition is skewed to low complexity over residues 447 to 473 (VSST…STTP) and 484 to 512 (NYSN…NNTT). The span at 513–535 (ISPVDSTTINSHTKNSSQLNYQY) shows a compositional bias: polar residues. Residues 579–613 (NSANKNSNKSNSANNNNTTTIATTTTTTTNNNNNS) are compositionally biased toward low complexity. Residues 621-631 (LSYNNYFNSPN) are compositionally biased toward polar residues. Positions 646–679 (QQQQQNQGQNQQQPLQLYQGDNNNNGTNTNSKFN) are enriched in low complexity. Residues 754-764 (NGKGNGNGGSG) are compositionally biased toward gly residues. Residues 765-774 (TPISENDSPI) are compositionally biased toward polar residues.

This sequence belongs to the cyclin family. As to quaternary structure, interacts with CDC28.

In terms of biological role, hypha-specific G1 cyclin-related protein involved in regulation of morphogenesis and opaque cells filamentous growth, and required for both conventional and pheromone-stimulated biofilm formation. Required to maintain hyphal tip localization of actin and SPA2. Regulates the CDC28 kinase during hyphal growth. The CDC28-HGC1 complex phosphorylates and prevents RGA2 from localizing to hyphal tips, leading to localized CDC42 activation for hyphal extension. The CDC28-HGC1 complex also phosphorylates SEC2 and maintains CDC11 phosphorylation throughout hyphal growth. Moreover CDC28-HGC1 phosphorylation of EFG1 represses cell separation genes during hyphal growth. Also partially controls SEP7 phosphorylation status and subsequent septin ring dynamics. Required for virulence and especially mediates dynamic adhesion to endothelium of blood vessels during circulation. This is Hypha-specific G1 cyclin-related protein 1 (HGC1) from Candida albicans (strain SC5314 / ATCC MYA-2876) (Yeast).